Here is a 135-residue protein sequence, read N- to C-terminus: MATFHFDLVSPEKLTFSGDVDQVDVPGVEGDFGVLAGHAPVVAAIRPGILTITTGGTPQKIIVLGGLAEVSEKGLTVLADVATSIQELDRAQFADTIASMEAKLAEKEGSELDKAIERLDHFKSIQSQLNTTALH.

The protein belongs to the ATPase epsilon chain family. In terms of assembly, F-type ATPases have 2 components, CF(1) - the catalytic core - and CF(0) - the membrane proton channel. CF(1) has five subunits: alpha(3), beta(3), gamma(1), delta(1), epsilon(1). CF(0) has three main subunits: a, b and c.

Its subcellular location is the cell inner membrane. In terms of biological role, produces ATP from ADP in the presence of a proton gradient across the membrane. The polypeptide is ATP synthase epsilon chain 1 (Nitrobacter hamburgensis (strain DSM 10229 / NCIMB 13809 / X14)).